The following is a 277-amino-acid chain: Shikimate dehydrogenase (NADP(+)) (277 aa).

Shikimate-binding positions include 17 to 19 and threonine 64; that span reads SRS. Lysine 68 acts as the Proton acceptor in catalysis. Positions 88 and 103 each coordinate shikimate. NADP(+) contacts are provided by residues 128-132 and leucine 217; that span reads GAGGS. Position 219 (tyrosine 219) interacts with shikimate. Glycine 240 contacts NADP(+).

This sequence belongs to the shikimate dehydrogenase family. As to quaternary structure, homodimer.

The catalysed reaction is shikimate + NADP(+) = 3-dehydroshikimate + NADPH + H(+). It functions in the pathway metabolic intermediate biosynthesis; chorismate biosynthesis; chorismate from D-erythrose 4-phosphate and phosphoenolpyruvate: step 4/7. Involved in the biosynthesis of the chorismate, which leads to the biosynthesis of aromatic amino acids. Catalyzes the reversible NADPH linked reduction of 3-dehydroshikimate (DHSA) to yield shikimate (SA). The protein is Shikimate dehydrogenase (NADP(+)) of Afipia carboxidovorans (strain ATCC 49405 / DSM 1227 / KCTC 32145 / OM5) (Oligotropha carboxidovorans).